Consider the following 337-residue polypeptide: ATP-dependent 6-phosphofructokinase (337 aa).

Gly11 lines the ATP pocket. Position 21–25 (21–25 (RAVVR)) interacts with ADP. ATP contacts are provided by residues 72–73 (RY) and 102–105 (GDGS). Asp103 provides a ligand contact to Mg(2+). 125–127 (TID) is a substrate binding site. Asp127 serves as the catalytic Proton acceptor. Arg154 contributes to the ADP binding site. Substrate is bound by residues Arg162 and 169–171 (MGR). Residues 185–187 (GAD), Arg212, and 214–216 (KNH) contribute to the ADP site. Substrate-binding positions include Glu223, Arg245, and 251-254 (HILR).

Belongs to the phosphofructokinase type A (PFKA) family. ATP-dependent PFK group I subfamily. Prokaryotic clade 'B1' sub-subfamily. As to quaternary structure, homotetramer. The cofactor is Mg(2+).

It localises to the cytoplasm. It carries out the reaction beta-D-fructose 6-phosphate + ATP = beta-D-fructose 1,6-bisphosphate + ADP + H(+). Its pathway is carbohydrate degradation; glycolysis; D-glyceraldehyde 3-phosphate and glycerone phosphate from D-glucose: step 3/4. With respect to regulation, allosterically activated by ADP and other diphosphonucleosides, and allosterically inhibited by phosphoenolpyruvate. Its function is as follows. Catalyzes the phosphorylation of D-fructose 6-phosphate to fructose 1,6-bisphosphate by ATP, the first committing step of glycolysis. The chain is ATP-dependent 6-phosphofructokinase from Streptococcus equi subsp. equi (strain 4047).